A 278-amino-acid polypeptide reads, in one-letter code: Large ribosomal subunit protein uL2 (278 aa).

Disordered regions lie at residues 28 to 56 (KPVK…GIAG) and 221 to 278 (RGVA…KKKR). The segment covering 269–278 (IRSRHAKKKR) has biased composition (basic residues).

This sequence belongs to the universal ribosomal protein uL2 family. As to quaternary structure, part of the 50S ribosomal subunit. Forms a bridge to the 30S subunit in the 70S ribosome.

One of the primary rRNA binding proteins. Required for association of the 30S and 50S subunits to form the 70S ribosome, for tRNA binding and peptide bond formation. It has been suggested to have peptidyltransferase activity; this is somewhat controversial. Makes several contacts with the 16S rRNA in the 70S ribosome. The chain is Large ribosomal subunit protein uL2 from Rhizorhabdus wittichii (strain DSM 6014 / CCUG 31198 / JCM 15750 / NBRC 105917 / EY 4224 / RW1) (Sphingomonas wittichii).